The primary structure comprises 373 residues: D-alanine--D-alanine ligase (373 aa).

Residues 156 to 363 enclose the ATP-grasp domain; it reads KKLLAAEGLP…YPTLLAAMVD (208 aa). 184 to 239 contacts ATP; that stretch reads RERLGLPVFVKPARGGSSIGVSRVTAWDELPAAVALARRHDPKVIVEAAVIGRELE. Positions 318, 330, and 332 each coordinate Mg(2+).

Belongs to the D-alanine--D-alanine ligase family. Requires Mg(2+) as cofactor. Mn(2+) is required as a cofactor.

Its subcellular location is the cytoplasm. The enzyme catalyses 2 D-alanine + ATP = D-alanyl-D-alanine + ADP + phosphate + H(+). It functions in the pathway cell wall biogenesis; peptidoglycan biosynthesis. Cell wall formation. The chain is D-alanine--D-alanine ligase from Mycolicibacterium smegmatis (strain ATCC 700084 / mc(2)155) (Mycobacterium smegmatis).